Here is a 397-residue protein sequence, read N- to C-terminus: 8-amino-7-oxononanoate synthase (397 aa).

Residue R24 participates in substrate binding. 110-111 is a binding site for pyridoxal 5'-phosphate; that stretch reads GY. H135 lines the substrate pocket. Pyridoxal 5'-phosphate contacts are provided by S183, H211, and T240. Position 243 is an N6-(pyridoxal phosphate)lysine (K243). T357 serves as a coordination point for substrate.

The protein belongs to the class-II pyridoxal-phosphate-dependent aminotransferase family. BioF subfamily. In terms of assembly, homodimer. Pyridoxal 5'-phosphate is required as a cofactor.

The catalysed reaction is 6-carboxyhexanoyl-[ACP] + L-alanine + H(+) = (8S)-8-amino-7-oxononanoate + holo-[ACP] + CO2. It functions in the pathway cofactor biosynthesis; biotin biosynthesis. In terms of biological role, catalyzes the decarboxylative condensation of pimeloyl-[acyl-carrier protein] and L-alanine to produce 8-amino-7-oxononanoate (AON), [acyl-carrier protein], and carbon dioxide. The polypeptide is 8-amino-7-oxononanoate synthase (Hydrogenovibrio crunogenus (strain DSM 25203 / XCL-2) (Thiomicrospira crunogena)).